Consider the following 90-residue polypeptide: DNA-directed RNA polymerase subunit Rpo11 (90 aa).

Belongs to the archaeal Rpo11/eukaryotic RPB11/RPC19 RNA polymerase subunit family. As to quaternary structure, part of the 13-subunit RNA polymerase complex.

It localises to the cytoplasm. The enzyme catalyses RNA(n) + a ribonucleoside 5'-triphosphate = RNA(n+1) + diphosphate. Functionally, DNA-dependent RNA polymerase (RNAP) catalyzes the transcription of DNA into RNA using the four ribonucleoside triphosphates as substrates. The sequence is that of DNA-directed RNA polymerase subunit Rpo11 from Sulfolobus acidocaldarius (strain ATCC 33909 / DSM 639 / JCM 8929 / NBRC 15157 / NCIMB 11770).